Reading from the N-terminus, the 317-residue chain is Aspartate carbamoyltransferase catalytic subunit (317 aa).

Carbamoyl phosphate-binding residues include Arg-65 and Thr-66. Lys-93 is an L-aspartate binding site. Residues Arg-115, His-145, and Gln-148 each contribute to the carbamoyl phosphate site. Residues Arg-178 and Arg-233 each contribute to the L-aspartate site. Carbamoyl phosphate contacts are provided by Gly-274 and Pro-275.

This sequence belongs to the aspartate/ornithine carbamoyltransferase superfamily. ATCase family. Heterododecamer (2C3:3R2) of six catalytic PyrB chains organized as two trimers (C3), and six regulatory PyrI chains organized as three dimers (R2).

The catalysed reaction is carbamoyl phosphate + L-aspartate = N-carbamoyl-L-aspartate + phosphate + H(+). It participates in pyrimidine metabolism; UMP biosynthesis via de novo pathway; (S)-dihydroorotate from bicarbonate: step 2/3. Functionally, catalyzes the condensation of carbamoyl phosphate and aspartate to form carbamoyl aspartate and inorganic phosphate, the committed step in the de novo pyrimidine nucleotide biosynthesis pathway. In Bordetella bronchiseptica (strain ATCC BAA-588 / NCTC 13252 / RB50) (Alcaligenes bronchisepticus), this protein is Aspartate carbamoyltransferase catalytic subunit.